We begin with the raw amino-acid sequence, 40 residues long: Photosystem II reaction center protein Y (40 aa).

A helical membrane pass occupies residues 5 to 23; sequence LVLVASPILLALGWAGFNI.

This sequence belongs to the PsbY family. In terms of assembly, PSII is composed of 1 copy each of membrane proteins PsbA, PsbB, PsbC, PsbD, PsbE, PsbF, PsbH, PsbI, PsbJ, PsbK, PsbL, PsbM, PsbT, PsbX, PsbY, PsbZ, Psb30/Ycf12, peripheral proteins PsbO, CyanoQ (PsbQ), PsbU, PsbV and a large number of cofactors. It forms dimeric complexes.

Its subcellular location is the cellular thylakoid membrane. In terms of biological role, loosely associated component of the core of photosystem II (PSII), it is not always seen in crystals. PSII is a light-driven water plastoquinone oxidoreductase, using light energy to abstract electrons from H(2)O, generating a proton gradient subsequently used for ATP formation. In Synechococcus sp. (strain WH7803), this protein is Photosystem II reaction center protein Y.